A 143-amino-acid chain; its full sequence is Transcriptional regulator MraZ (143 aa).

2 consecutive SpoVT-AbrB domains span residues 5–47 (EYQH…PKDE) and 76–119 (AIES…SKDN).

The protein belongs to the MraZ family. As to quaternary structure, forms oligomers.

It is found in the cytoplasm. It localises to the nucleoid. The polypeptide is Transcriptional regulator MraZ (Oenococcus oeni (strain ATCC BAA-331 / PSU-1)).